Reading from the N-terminus, the 493-residue chain is Inosine-5'-monophosphate dehydrogenase (493 aa).

2 consecutive CBS domains span residues 97–155 and 159–219; these read VIID…NAPI and MTSE…AKDE. Residues Asp-253 and 303 to 305 contribute to the NAD(+) site; that span reads GIG. 2 residues coordinate K(+): Gly-305 and Gly-307. Residue Ser-308 participates in IMP binding. Cys-310 contacts K(+). Cys-310 acts as the Thioimidate intermediate in catalysis. Residues 343–345, 366–367, and 390–394 each bind IMP; these read DGG, GS, and YRGMG. The active-site Proton acceptor is the Arg-406. Glu-421 provides a ligand contact to IMP. Positions 475, 476, and 477 each coordinate K(+).

This sequence belongs to the IMPDH/GMPR family. As to quaternary structure, homotetramer. K(+) is required as a cofactor.

It carries out the reaction IMP + NAD(+) + H2O = XMP + NADH + H(+). Its pathway is purine metabolism; XMP biosynthesis via de novo pathway; XMP from IMP: step 1/1. With respect to regulation, mycophenolic acid (MPA) is a non-competitive inhibitor that prevents formation of the closed enzyme conformation by binding to the same site as the amobile flap. In contrast, mizoribine monophosphate (MZP) is a competitive inhibitor that induces the closed conformation. MPA is a potent inhibitor of mammalian IMPDHs but a poor inhibitor of the bacterial enzymes. MZP is a more potent inhibitor of bacterial IMPDH. Functionally, catalyzes the conversion of inosine 5'-phosphate (IMP) to xanthosine 5'-phosphate (XMP), the first committed and rate-limiting step in the de novo synthesis of guanine nucleotides, and therefore plays an important role in the regulation of cell growth. The sequence is that of Inosine-5'-monophosphate dehydrogenase from Streptococcus pyogenes serotype M3 (strain ATCC BAA-595 / MGAS315).